Here is a 41-residue protein sequence, read N- to C-terminus: Hemoglobin subunit beta (41 aa).

In terms of domain architecture, Globin spans 1-41 (LGNVLVCVLAHHFGKEFTPQVQAAYQKVVAGVANALAHKYH). K39 is subject to N6-acetyllysine.

Belongs to the globin family. In terms of assembly, heterotetramer of two alpha chains and two beta chains. As to expression, red blood cells.

In terms of biological role, involved in oxygen transport from the lung to the various peripheral tissues. The polypeptide is Hemoglobin subunit beta (HBB) (Colobus guereza (Mantled guereza)).